A 551-amino-acid polypeptide reads, in one-letter code: Eukaryotic translation initiation factor 3 subunit D-2 (551 aa).

Residues 91–154 form a disordered region; the sequence is TKPYQRGRYR…RNTQNMGRRF (64 aa). The segment covering 95 to 113 has biased composition (basic residues); the sequence is QRGRYRPNMRNNVRSRGRT. The segment covering 121-136 has biased composition (low complexity); the sequence is ASLGGSTAGGATASTT. An RNA gate region spans residues 290–304; it reads QFDLLTVNETSVEPP. The segment at 527–551 is disordered; that stretch reads PENAFDSDGDEEEESSDPLSNSNDN. Over residues 531 to 542 the composition is skewed to acidic residues; that stretch reads FDSDGDEEEESS.

The protein belongs to the eIF-3 subunit D family. Component of the eukaryotic translation initiation factor 3 (eIF-3) complex. The eIF-3 complex interacts with pix.

It localises to the cytoplasm. MRNA cap-binding component of the eukaryotic translation initiation factor 3 (eIF-3) complex, which is involved in protein synthesis of a specialized repertoire of mRNAs and, together with other initiation factors, stimulates binding of mRNA and methionyl-tRNAi to the 40S ribosome. The eIF-3 complex specifically targets and initiates translation of a subset of mRNAs involved in cell proliferation. In the eIF-3 complex, eif3d specifically recognizes and binds the 7-methylguanosine cap of a subset of mRNAs. The chain is Eukaryotic translation initiation factor 3 subunit D-2 from Drosophila melanogaster (Fruit fly).